A 152-amino-acid chain; its full sequence is Small ribosomal subunit protein uS8m (152 aa).

This sequence belongs to the universal ribosomal protein uS8 family. In terms of assembly, component of the mitochondrial small ribosomal subunit (mt-SSU). Mature yeast 74S mitochondrial ribosomes consist of a small (37S) and a large (54S) subunit. The 37S small subunit contains a 15S ribosomal RNA (15S mt-rRNA) and at least 32 different proteins. The 54S large subunit contains a 21S rRNA (21S mt-rRNA) and at least 45 different proteins.

The protein resides in the mitochondrion. Its function is as follows. Component of the mitochondrial ribosome (mitoribosome), a dedicated translation machinery responsible for the synthesis of mitochondrial genome-encoded proteins, including at least some of the essential transmembrane subunits of the mitochondrial respiratory chain. The mitoribosomes are attached to the mitochondrial inner membrane and translation products are cotranslationally integrated into the membrane. The sequence is that of Small ribosomal subunit protein uS8m (mrps8) from Schizosaccharomyces pombe (strain 972 / ATCC 24843) (Fission yeast).